A 189-amino-acid chain; its full sequence is MRLSLPLLLLLLGAWAIPGGLGDRAPLTATAPQLDDEEMYSAHMPAHLRCDACRAVAYQMWQNLAKAETKLHTSNSGGRRELSELVYTDVLDRSCSRNWQDYGVREVDQVKRLTGPGLSEGPEPSISVMVTGGPWPTRLSRTCLHYLGEFGEDQIYEAHQQGRGALEALLCGGPQGACSEKVSATREEL.

The first 22 residues, Met1–Gly22, serve as a signal peptide directing secretion. Cystine bridges form between Cys50-Cys178, Cys53-Cys171, and Cys95-Cys143. The Prevents secretion from ER motif lies at Arg186–Leu189.

It belongs to the MZB1 family. Part of the ER chaperone complex, a multi-protein complex in the endoplasmic reticulum containing a large number of molecular chaperones which associates with unassembled incompletely folded immunoglobulin heavy chains. Isoform 2 interacts with CASP2 and CASP9. Interacts with HSP90B1 and PDIA3 in a calcium-dependent manner. Post-translationally, forms an interchain disulfide bond with IgM monomers. Widely expressed with highest levels in adult brain, small intestine and lymphoid tissues such as thymus and spleen. Expression is frequently lower in intestinal-type gastric cancer. In obese patients, more abundant in omental than in subcutaneous fat.

The protein resides in the endoplasmic reticulum lumen. It is found in the secreted. It localises to the cytoplasm. In terms of biological role, associates with immunoglobulin M (IgM) heavy and light chains and promotes IgM assembly and secretion. May exert its effect by acting as a molecular chaperone or as an oxidoreductase as it displays a low level of oxidoreductase activity. Isoform 2 may be involved in regulation of apoptosis. Helps to diversify peripheral B-cell functions by regulating Ca(2+) stores, antibody secretion and integrin activation. Acts as a hormone-regulated adipokine/pro-inflammatory cytokine that is implicated in causing chronic inflammation, affecting cellular expansion and blunting insulin response in adipocytes. May have a role in the onset of insulin resistance. The sequence is that of Marginal zone B- and B1-cell-specific protein (MZB1) from Homo sapiens (Human).